Reading from the N-terminus, the 65-residue chain is U11-theraphotoxin-Cg1a (65 aa).

A signal peptide spans 1 to 21 (MKTTILLVILGLTLLFALSAA). The propeptide occupies 22–29 (TELKDEER). 3 disulfides stabilise this stretch: C31–C45, C38–C50, and C44–C57.

Belongs to the neurotoxin 10 (Hwtx-1) family. 32 (Jztx-16) subfamily. In terms of tissue distribution, expressed by the venom gland.

Its subcellular location is the secreted. In terms of biological role, probable ion channel inhibitor. This Chilobrachys guangxiensis (Chinese earth tiger tarantula) protein is U11-theraphotoxin-Cg1a.